Here is a 101-residue protein sequence, read N- to C-terminus: MEPVDPNLEPWKHPGSQPRTACNNCYCKKCCFHCYACFTRKGLGISYGRKKRRQRRRAPQDSQTHQASLSKQPASQSRGDPTGPTESKKKVERETETDPFD.

The segment at 1-24 (MEPVDPNLEPWKHPGSQPRTACNN) is interaction with human CREBBP. The segment at 1-48 (MEPVDPNLEPWKHPGSQPRTACNNCYCKKCCFHCYACFTRKGLGISYG) is transactivation. Zn(2+) contacts are provided by Cys22, Cys25, and Cys27. Residues 22 to 37 (CNNCYCKKCCFHCYAC) form a cysteine-rich region. At Lys28 the chain carries N6-acetyllysine; by host PCAF. Zn(2+) is bound by residues Cys30, His33, Cys34, and Cys37. The core stretch occupies residues 38-48 (FTRKGLGISYG). Over residues 48-57 (GRKKRRQRRR) the composition is skewed to basic residues. Residues 48 to 101 (GRKKRRQRRRAPQDSQTHQASLSKQPASQSRGDPTGPTESKKKVERETETDPFD) are disordered. The Nuclear localization signal, RNA-binding (TAR), and protein transduction motif lies at 49-57 (RKKRRQRRR). The tract at residues 49 to 86 (RKKRRQRRRAPQDSQTHQASLSKQPASQSRGDPTGPTE) is interaction with the host capping enzyme RNGTT. N6-acetyllysine; by host EP300 and GCN5L2 occurs at positions 50 and 51. Residues Arg52 and Arg53 each carry the asymmetric dimethylarginine; by host PRMT6 modification. Residues 60-79 (QDSQTHQASLSKQPASQSRG) show a composition bias toward polar residues. Lys71 participates in a covalent cross-link: Glycyl lysine isopeptide (Lys-Gly) (interchain with G-Cter in ubiquitin). The short motif at 78–80 (RGD) is the Cell attachment site element. Residues 86–101 (ESKKKVERETETDPFD) are compositionally biased toward basic and acidic residues.

Belongs to the lentiviruses Tat family. Interacts with host CCNT1. Associates with the P-TEFb complex composed at least of Tat, P-TEFb (CDK9 and CCNT1), TAR RNA, RNA Pol II. Recruits the HATs CREBBP, TAF1/TFIID, EP300, PCAF and GCN5L2. Interacts with host KAT5/Tip60; this interaction targets the latter to degradation. Interacts with the host deacetylase SIRT1. Interacts with host capping enzyme RNGTT; this interaction stimulates RNGTT. Binds to host KDR, and to the host integrins ITGAV/ITGB3 and ITGA5/ITGB1. Interacts with host KPNB1/importin beta-1 without previous binding to KPNA1/importin alpha-1. Interacts with EIF2AK2. Interacts with host nucleosome assembly protein NAP1L1; this interaction may be required for the transport of Tat within the nucleus, since the two proteins interact at the nuclear rim. Interacts with host C1QBP/SF2P32; this interaction involves lysine-acetylated Tat. Interacts with the host chemokine receptors CCR2, CCR3 and CXCR4. Interacts with host DPP4/CD26; this interaction may trigger an anti-proliferative effect. Interacts with host LDLR. Interacts with the host extracellular matrix metalloproteinase MMP1. Interacts with host PRMT6; this interaction mediates Tat's methylation. Interacts with, and is ubiquitinated by MDM2/Hdm2. Interacts with host PSMC3 and HTATIP2. Interacts with STAB1; this interaction may overcome SATB1-mediated repression of IL2 and IL2RA (interleukin) in T cells by binding to the same domain than HDAC1. Interacts (when acetylated) with human CDK13, thereby increasing HIV-1 mRNA splicing and promoting the production of the doubly spliced HIV-1 protein Nef. Interacts with host TBP; this interaction modulates the activity of transcriptional pre-initiation complex. Interacts with host RELA. Interacts with host PLSCR1; this interaction negatively regulates Tat transactivation activity by altering its subcellular distribution. Post-translationally, asymmetrical arginine methylation by host PRMT6 seems to diminish the transactivation capacity of Tat and affects the interaction with host CCNT1. Acetylation by EP300, CREBBP, GCN5L2/GCN5 and PCAF regulates the transactivation activity of Tat. EP300-mediated acetylation of Lys-50 promotes dissociation of Tat from the TAR RNA through the competitive binding to PCAF's bromodomain. In addition, the non-acetylated Tat's N-terminus can also interact with PCAF. PCAF-mediated acetylation of Lys-28 enhances Tat's binding to CCNT1. Lys-50 is deacetylated by SIRT1. In terms of processing, polyubiquitination by host MDM2 does not target Tat to degradation, but activates its transactivation function and fosters interaction with CCNT1 and TAR RNA. Post-translationally, phosphorylated by EIF2AK2 on serine and threonine residues adjacent to the basic region important for TAR RNA binding and function. Phosphorylation of Tat by EIF2AK2 is dependent on the prior activation of EIF2AK2 by dsRNA.

Its subcellular location is the host nucleus. It is found in the host nucleolus. It localises to the host cytoplasm. The protein localises to the secreted. Its function is as follows. Transcriptional activator that increases RNA Pol II processivity, thereby increasing the level of full-length viral transcripts. Recognizes a hairpin structure at the 5'-LTR of the nascent viral mRNAs referred to as the transactivation responsive RNA element (TAR) and recruits the cyclin T1-CDK9 complex (P-TEFb complex) that will in turn hyperphosphorylate the RNA polymerase II to allow efficient elongation. The CDK9 component of P-TEFb and other Tat-activated kinases hyperphosphorylate the C-terminus of RNA Pol II that becomes stabilized and much more processive. Other factors such as HTATSF1/Tat-SF1, SUPT5H/SPT5, and HTATIP2 are also important for Tat's function. Besides its effect on RNA Pol II processivity, Tat induces chromatin remodeling of proviral genes by recruiting the histone acetyltransferases (HATs) CREBBP, EP300 and PCAF to the chromatin. This also contributes to the increase in proviral transcription rate, especially when the provirus integrates in transcriptionally silent region of the host genome. To ensure maximal activation of the LTR, Tat mediates nuclear translocation of NF-kappa-B by interacting with host RELA. Through its interaction with host TBP, Tat may also modulate transcription initiation. Tat can reactivate a latently infected cell by penetrating in it and transactivating its LTR promoter. In the cytoplasm, Tat is thought to act as a translational activator of HIV-1 mRNAs. Extracellular circulating Tat can be endocytosed by surrounding uninfected cells via the binding to several surface receptors such as CD26, CXCR4, heparan sulfate proteoglycans (HSPG) or LDLR. Neurons are rarely infected, but they internalize Tat via their LDLR. Through its interaction with nuclear HATs, Tat is potentially able to control the acetylation-dependent cellular gene expression. Modulates the expression of many cellular genes involved in cell survival, proliferation or in coding for cytokines or cytokine receptors. Tat plays a role in T-cell and neurons apoptosis. Tat induced neurotoxicity and apoptosis probably contribute to neuroAIDS. Circulating Tat also acts as a chemokine-like and/or growth factor-like molecule that binds to specific receptors on the surface of the cells, affecting many cellular pathways. In the vascular system, Tat binds to ITGAV/ITGB3 and ITGA5/ITGB1 integrins dimers at the surface of endothelial cells and competes with bFGF for heparin-binding sites, leading to an excess of soluble bFGF. In Homo sapiens (Human), this protein is Protein Tat.